The primary structure comprises 319 residues: Beta-ketoacyl-[acyl-carrier-protein] synthase III (319 aa).

Catalysis depends on residues cysteine 115 and histidine 246. Residues glutamine 247–arginine 251 form an ACP-binding region. The active site involves asparagine 276.

The protein belongs to the thiolase-like superfamily. FabH family. Homodimer.

It localises to the cytoplasm. The enzyme catalyses malonyl-[ACP] + acetyl-CoA + H(+) = 3-oxobutanoyl-[ACP] + CO2 + CoA. The protein operates within lipid metabolism; fatty acid biosynthesis. Functionally, catalyzes the condensation reaction of fatty acid synthesis by the addition to an acyl acceptor of two carbons from malonyl-ACP. Catalyzes the first condensation reaction which initiates fatty acid synthesis and may therefore play a role in governing the total rate of fatty acid production. Possesses both acetoacetyl-ACP synthase and acetyl transacylase activities. Its substrate specificity determines the biosynthesis of branched-chain and/or straight-chain of fatty acids. This chain is Beta-ketoacyl-[acyl-carrier-protein] synthase III, found in Coxiella burnetii (strain RSA 331 / Henzerling II).